Consider the following 1189-residue polypeptide: Disabled homolog 2-interacting protein (1189 aa).

The interval 1-75 (MSAGGNARKS…EPSASTPFRV (75 aa)) is disordered. Residues 20-38 (LLRRPRLQRQRSRSRSRTR) show a composition bias toward basic residues. A compositionally biased stretch (basic and acidic residues) spans 39–49 (PARESPQERPG). Polar residues predominate over residues 59-73 (SEKNPSMEPSASTPF). A PH domain is found at 101–202 (SFRHILPGFR…WMENLRRAVH (102 aa)). Residues 193-311 (WMENLRRAVH…AGRQFVEKWY (119 aa)) enclose the C2 domain. In terms of domain architecture, Ras-GAP spans 387–595 (GKVKDFLTDL…TNMQRFLLEI (209 aa)). A necessary for interaction with AKT1 region spans residues 646-943 (LRDVHTALST…RTPPTLLSTL (298 aa)). Residues 653–668 (LSTPGSGQLPGTNDLA) are compositionally biased toward polar residues. Disordered stretches follow at residues 653–679 (LSTP…SSVS) and 715–738 (RSSG…PDLQ). A compositionally biased stretch (low complexity) spans 669–679 (STPGSGSSSVS). Residues 715-731 (RSSGVQPSPARSSSYSE) are compositionally biased toward polar residues. Ser-728 carries the phosphoserine; by MAP3K5 and RIPK1 modification. At Ser-747 the chain carries Phosphoserine. Disordered stretches follow at residues 804–823 (VPTP…PQLL), 843–865 (PRGL…NSEE), 895–998 (SLTE…SPNA), 1015–1034 (EDEG…SKEE), and 1163–1189 (ARNG…SSNC). Over residues 852–865 (EGHSSLSSHSNSEE) the composition is skewed to low complexity. A compositionally biased stretch (pro residues) spans 919-931 (QPPPPPPPPPPAP). Polar residues-rich tracts occupy residues 939–955 (LLST…TLAS) and 967–976 (LRQQSSSSKG). A phosphoserine mark is found at Ser-978 and Ser-995. Over residues 1023-1034 (PPHRDRLRSKEE) the composition is skewed to basic and acidic residues. Positions 1025-1159 (HRDRLRSKEE…SALTQLKERY (135 aa)) form a coiled coil.

As to quaternary structure, on plasma membrane, exists in an inactive form complexed with TNFR1; in response to TNF-alpha, dissociates from TNFR1 complex, translocates to cytoplasm and forms part of an intracellular signaling complex comprising TRADD, RIPK1, TRAF2 and MAP3K5. Interacts with DAB1. Part of a cytoplasmic complex made of HIPK1, DAB2IP and MAP3K5 in response to TNF-alpha; this complex formation promotes MAP3K5-JNK activation and subsequent apoptosis. Interacts (via N-terminal domain) with JAK2; the interaction occurs in a IFNG/IFN-gamma-dependent manner and inhibits JAK2 autophosphorylation activity. Interacts (via C2 domain) with GSK3B; the interaction stimulates GSK3B kinase activation. Interacts (via C2 domain) with PPP2CA. Interacts (via proline-rich motif) with a regulatory p85 subunit (via SH3 domain) of the PI3K complex; the interaction inhibits the PI3K-AKT complex activity in a TNF-alpha-dependent manner in prostate cancer (PCa) cells. Interacts with AKT1; the interaction is increased in a TNF-alpha-induced manner. Interacts (via C2 domain and active form preferentially) with KDR/VEGFR2 (tyrosine-phosphorylated active form preferentially); the interaction occurs at the late phase of VEGFA response and inhibits KDR/VEGFR2 activity. Interacts (via N-terminus C2 domain) with MAP3K5 ('Ser-966' dephosphorylated form preferentially); the interaction occurs in a TNF-alpha-induced manner. Interacts (via Ras-GAP domain) with the catalytic subunit of protein phosphatase PP2A; the interaction occurs in resting endothelial cells, is further enhanced by TNF-alpha stimulation and is required to bridge PP2A to MAP3K5. Interacts (via C-terminus PER domain) with TRAF2 (via zinc fingers); the interaction occurs in a TNF-alpha-dependent manner. Interacts with 14-3-3 proteins; the interaction occurs in a TNF-alpha-dependent manner. Interacts (via Ras-GAP domain) with RIPK1 (via kinase domain); the interaction occurs in a TNF-alpha-dependent manner. Interacts (via PH domain) with ERN1. Interacts with TRAF2. Interacts (via NPXY motif) with DAB2 (via PID domain). Interacts with RAB40C; acts as a GAP for RAB40C. In response to TNF-alpha-induction, phosphorylated at Ser-728; phosphorylation leads to a conformational change, and thus, increases its association with 14-3-3 proteins, MAP3K5, RIPK1 and TRAF2 in endothelial cells; also stimulates regulatory p85 subunit sequestring and PI3K-p85 complex activity inhibition. Expressed in vascular endothelium of muscle and aorta, in smooth muscle cells of aorta and epithelial cells of lung. Expressed throughout the brain, including olfactory bulb, hypothalamus, cerebellum and cerebral cortex. Expressed in the soma and processes of neurons in a variety of brain structures, including the developing cerebral cortex, CA1 pyramidal neurons and Purkinje cells. Poorly expressed in medulloblastoma cells compared to cerebellar precursor proliferating progenitor cells (at protein level). Highly expressed in the brain, salivary gland, and testis; moderate expression in kidney and heart. Low expression in the lung, seminal vesicle, ventral prostate, epididymis, liver, and bladder. Very low expression in the coagulation gland and skeleton muscles. Lowest expression seen in spleen.

It is found in the cytoplasm. It localises to the cell membrane. The protein localises to the membrane. Its subcellular location is the cell projection. The protein resides in the dendrite. Functions as a scaffold protein implicated in the regulation of a large spectrum of both general and specialized signaling pathways. Involved in several processes such as innate immune response, inflammation and cell growth inhibition, apoptosis, cell survival, angiogenesis, cell migration and maturation. Also plays a role in cell cycle checkpoint control; reduces G1 phase cyclin levels resulting in G0/G1 cell cycle arrest. Mediates signal transduction by receptor-mediated inflammatory signals, such as the tumor necrosis factor (TNF), interferon (IFN) or lipopolysaccharide (LPS). Modulates the balance between phosphatidylinositol 3-kinase (PI3K)-AKT-mediated cell survival and apoptosis stimulated kinase (MAP3K5)-JNK signaling pathways; sequesters both AKT1 and MAP3K5 and counterbalances the activity of each kinase by modulating their phosphorylation status in response to pro-inflammatory stimuli. Acts as a regulator of the endoplasmic reticulum (ER) unfolded protein response (UPR) pathway; specifically involved in transduction of the ER stress-response to the JNK cascade through ERN1. Mediates TNF-alpha-induced apoptosis activation by facilitating dissociation of inhibitor 14-3-3 from MAP3K5; recruits the PP2A phosphatase complex which dephosphorylates MAP3K5 on 'Ser-966', leading to the dissociation of 13-3-3 proteins and activation of the MAP3K5-JNK signaling pathway in endothelial cells. Also mediates TNF/TRAF2-induced MAP3K5-JNK activation, while it inhibits CHUK-NF-kappa-B signaling. Acts a negative regulator in the IFN-gamma-mediated JAK-STAT signaling cascade by inhibiting smooth muscle cell (VSMCs) proliferation and intimal expansion, and thus, prevents graft arteriosclerosis (GA). Acts as a GTPase-activating protein (GAP) for the ADP ribosylation factor 6 (ARF6) and Ras. Promotes hydrolysis of the ARF6-bound GTP and thus, negatively regulates phosphatidylinositol 4,5-bisphosphate (PIP2)-dependent TLR4-TIRAP-MyD88 and NF-kappa-B signaling pathways in endothelial cells in response to lipopolysaccharides (LPS). Binds specifically to phosphatidylinositol 4-phosphate (PtdIns4P) and phosphatidylinositol 3-phosphate (PtdIns3P). In response to vascular endothelial growth factor (VEGFA), acts as a negative regulator of the VEGFR2-PI3K-mediated angiogenic signaling pathway by inhibiting endothelial cell migration and tube formation. In the developing brain, promotes both the transition from the multipolar to the bipolar stage and the radial migration of cortical neurons from the ventricular zone toward the superficial layer of the neocortex in a glial-dependent locomotion process. Probable downstream effector of the Reelin signaling pathway; promotes Purkinje cell (PC) dendrites development and formation of cerebellar synapses. Also functions as a tumor suppressor protein in prostate cancer progression; prevents cell proliferation and epithelial-to-mesenchymal transition (EMT) through activation of the glycogen synthase kinase-3 beta (GSK3B)-induced beta-catenin and inhibition of PI3K-AKT and Ras-MAPK survival downstream signaling cascades, respectively. This chain is Disabled homolog 2-interacting protein (Dab2ip), found in Mus musculus (Mouse).